The chain runs to 211 residues: Protein-L-isoaspartate O-methyltransferase (211 aa).

Residue Ser-62 is part of the active site.

This sequence belongs to the methyltransferase superfamily. L-isoaspartyl/D-aspartyl protein methyltransferase family.

It is found in the cytoplasm. It catalyses the reaction [protein]-L-isoaspartate + S-adenosyl-L-methionine = [protein]-L-isoaspartate alpha-methyl ester + S-adenosyl-L-homocysteine. Functionally, catalyzes the methyl esterification of L-isoaspartyl residues in peptides and proteins that result from spontaneous decomposition of normal L-aspartyl and L-asparaginyl residues. It plays a role in the repair and/or degradation of damaged proteins. This Shewanella amazonensis (strain ATCC BAA-1098 / SB2B) protein is Protein-L-isoaspartate O-methyltransferase.